The sequence spans 414 residues: Cytochrome c-554 (414 aa).

A signal peptide spans 1–24 (MQSSRPSDRQLAIVVSVAVGIVVA). Residues methionine 110, cysteine 131, cysteine 134, histidine 135, methionine 154, cysteine 179, cysteine 182, histidine 183, methionine 283, cysteine 294, cysteine 297, histidine 298, cysteine 378, cysteine 381, and histidine 382 each contribute to the heme site.

Binds 4 heme groups per subunit. In terms of processing, the N-terminus is blocked.

It is found in the periplasm. Functionally, serves as the immediate electron donor to the oxidized BChl2 (bacteriochlorophyll dimer) that is oxidized in the first step of light-induced charge separation. Can also oxidize low-potential substrates. This Chloroflexus aurantiacus (strain ATCC 29366 / DSM 635 / J-10-fl) protein is Cytochrome c-554 (puf2C).